A 392-amino-acid polypeptide reads, in one-letter code: 6-aminohexanoate-dimer hydrolase (392 aa).

The segment at 1 to 22 (MNARSTGQHPARYPGAAAGEPT) is disordered. The active site involves Ser112.

The enzyme catalyses [N-(6-aminohexanoyl)](n) + H2O = [N-(6-aminohexanoyl)](n-1) + 6-aminohexanoate. It carries out the reaction N-(6-aminohexanoyl)-6-aminohexanoate + H2O = 2 6-aminohexanoate. It functions in the pathway xenobiotic degradation; nylon-6 oligomer degradation. Its function is as follows. Involved in nylon oligomer degradation. This Paenarthrobacter ureafaciens protein is 6-aminohexanoate-dimer hydrolase.